The sequence spans 448 residues: tRNA modification GTPase MnmE (448 aa).

(6S)-5-formyl-5,6,7,8-tetrahydrofolate is bound by residues R24, E81, and K120. One can recognise a TrmE-type G domain in the interval 216–373 (GLNVVLVGAP…LKRTLLREAG (158 aa)). N226 provides a ligand contact to K(+). GTP-binding positions include 226-231 (NVGKSS), 245-251 (TDIAGTT), and 270-273 (DTAG). Mg(2+) is bound at residue S230. K(+) is bound by residues T245, I247, and T250. T251 serves as a coordination point for Mg(2+). K448 is a (6S)-5-formyl-5,6,7,8-tetrahydrofolate binding site.

This sequence belongs to the TRAFAC class TrmE-Era-EngA-EngB-Septin-like GTPase superfamily. TrmE GTPase family. In terms of assembly, homodimer. Heterotetramer of two MnmE and two MnmG subunits. K(+) is required as a cofactor.

It is found in the cytoplasm. In terms of biological role, exhibits a very high intrinsic GTPase hydrolysis rate. Involved in the addition of a carboxymethylaminomethyl (cmnm) group at the wobble position (U34) of certain tRNAs, forming tRNA-cmnm(5)s(2)U34. In Neisseria meningitidis serogroup B (strain ATCC BAA-335 / MC58), this protein is tRNA modification GTPase MnmE.